Reading from the N-terminus, the 370-residue chain is Protein Mut11 (370 aa).

Residues 1–22 are disordered; sequence MARGPGDTDMDEASADAAIPSS. WD repeat units lie at residues 38–77, 80–119, 122–162, 165–204, 208–247, 262–301, and 329–370; these read GHTK…RVNT, GHSC…CLRT, GHTN…CLRE, AHSD…CLKT, RDSP…TRRT, GFLG…VVGR, and GHTA…PAAA.

It belongs to the WD repeat WDR5/wds family.

The protein resides in the nucleus. Functionally, part of a complex involved in 'Lys-4' histone H3 methylation. The sequence is that of Protein Mut11 (Mut11) from Chlamydomonas reinhardtii (Chlamydomonas smithii).